Consider the following 534-residue polypeptide: N-acetylglutamate synthase, mitochondrial (534 aa).

The N-terminal 18 residues, 1-18 (MATALMAVVLRAAAVAPR), are a transit peptide targeting the mitochondrion. The segment at 19–99 (LRGRGGTGGA…HESPEPPSGR (81 aa)) is disordered. Residues 19–376 (LRGRGGTGGA…SGTLFKNAER (358 aa)) form an amino-acid kinase domain (AAK) region. The segment covering 81 to 96 (VPSPRPPVPHESPEPP) has biased composition (pro residues). The N-acetyltransferase domain maps to 375 to 526 (ERMLRVRSLD…HAKGLPDSFH (152 aa)). Residues K401, K444, and 474–479 (RSRVTN) contribute to the substrate site.

The protein belongs to the acetyltransferase family. Homodimer. Homotetramer. Probably processed by mitochondrial processing peptidase (MPP). The long form has not yet been isolated. In terms of tissue distribution, highly expressed in the adult liver, kidney and small intestine. Weakly expressed in the fetal liver, lung, pancreas, placenta, heart and brain tissue.

Its subcellular location is the mitochondrion matrix. It carries out the reaction L-glutamate + acetyl-CoA = N-acetyl-L-glutamate + CoA + H(+). Its pathway is amino-acid biosynthesis; L-arginine biosynthesis; N(2)-acetyl-L-ornithine from L-glutamate: step 1/4. Increased by L-arginine. Its function is as follows. Plays a role in the regulation of ureagenesis by producing the essential cofactor N-acetylglutamate (NAG), thus modulating carbamoylphosphate synthase I (CPS1) activity. This chain is N-acetylglutamate synthase, mitochondrial (NAGS), found in Homo sapiens (Human).